A 328-amino-acid polypeptide reads, in one-letter code: Biotin synthase (328 aa).

A Radical SAM core domain is found at 53 to 282 (FHGNRVDLCA…ATTIRYAGGR (230 aa)). Residues C71, C75, and C78 each coordinate [4Fe-4S] cluster. [2Fe-2S] cluster-binding residues include S115, C147, C207, and R277.

This sequence belongs to the radical SAM superfamily. Biotin synthase family. As to quaternary structure, homodimer. [4Fe-4S] cluster is required as a cofactor. The cofactor is [2Fe-2S] cluster.

The catalysed reaction is (4R,5S)-dethiobiotin + (sulfur carrier)-SH + 2 reduced [2Fe-2S]-[ferredoxin] + 2 S-adenosyl-L-methionine = (sulfur carrier)-H + biotin + 2 5'-deoxyadenosine + 2 L-methionine + 2 oxidized [2Fe-2S]-[ferredoxin]. It functions in the pathway cofactor biosynthesis; biotin biosynthesis; biotin from 7,8-diaminononanoate: step 2/2. Functionally, catalyzes the conversion of dethiobiotin (DTB) to biotin by the insertion of a sulfur atom into dethiobiotin via a radical-based mechanism. The polypeptide is Biotin synthase (Desulforudis audaxviator (strain MP104C)).